Consider the following 583-residue polypeptide: MASEPPSSPPGAGATLEDTLGWYKSQYEQLESELAEFRDSSRELEQELEKDIERAEKQERHHQEKAETLGFEVEEWKRKYRESKTEASASQNALEKEITTLRDTNRTLQLKLRDIEVANDDFERQARNTTSSLEDMESKYNQAIERAVMMEEEIKIGEQEREQLRIESQRLREELGDLKIEAELLQDKFKKQESRHLSTISTDLSVLASPTFDGHPASPGSTASSPLITTPTDSKSMTEDGDTLSELPDPPSPPMSDVSAPLPKVAASRPSAHRRTVSRSRLPSTDISTTPLPRSKPPTATTRAPGSRISTGGTTTMRTPAQRAVGPRSASNKLPTSNSLTHIRTLTAQMQRLEARVHSVRSKLPGPTRTPPRASPRTNVYSATNMPASITIRSRKRTSGSAASSVTGDDPTPTNIPTSTPKGSHVPRLSTSGVSRLSFGPLPNRGGPDEISRPSSRASTSYATSYARPPSRAAGEGIPRPISRASLTGVRTPMGRSRSSMGFHGHSASISSHLDLEEQDEGEFRTPSRRGTYSSQGGEVSGSGIPMPATRRRSGSRRISASTMRSSVSGPPRKQLSDLGETY.

A coiled-coil region spans residues 14 to 195; it reads ATLEDTLGWY…QDKFKKQESR (182 aa). Disordered regions lie at residues 34-68, 211-339, and 358-583; these read LAEF…KAET, TFDG…TSNS, and HSVR…GETY. The span at 35 to 67 shows a compositional bias: basic and acidic residues; the sequence is AEFRDSSRELEQELEKDIERAEKQERHHQEKAE. 5 stretches are compositionally biased toward polar residues: residues 219–235, 279–319, 329–339, 379–392, and 399–422; these read PGST…TDSK, RSRL…TMRT, SASNKLPTSNS, NVYS…SITI, and SGSA…STPK. Residues 453–469 show a composition bias toward low complexity; sequence RPSSRASTSYATSYARP. Polar residues predominate over residues 529–538; that stretch reads RRGTYSSQGG.

It belongs to the nudE family. As to quaternary structure, self-associates. Interacts with PAC1.

It is found in the cytoplasm. Its subcellular location is the cytoskeleton. Functionally, required for nuclear migration. The polypeptide is Nuclear distribution protein nudE homolog 1 (NDE1) (Gibberella zeae (strain ATCC MYA-4620 / CBS 123657 / FGSC 9075 / NRRL 31084 / PH-1) (Wheat head blight fungus)).